A 374-amino-acid polypeptide reads, in one-letter code: Serine/threonine-protein kinase-transforming protein mos (374 aa).

Positions 94–370 (VCLMHRLGSG…LLQRDLKAFR (277 aa)) constitute a Protein kinase domain. Residues 100-108 (LGSGGFGSV) and Lys121 contribute to the ATP site. The Proton acceptor role is filled by Asp229.

This sequence belongs to the protein kinase superfamily. Ser/Thr protein kinase family.

It carries out the reaction L-seryl-[protein] + ATP = O-phospho-L-seryl-[protein] + ADP + H(+). It catalyses the reaction L-threonyl-[protein] + ATP = O-phospho-L-threonyl-[protein] + ADP + H(+). This Mus musculus (Mouse) protein is Serine/threonine-protein kinase-transforming protein mos (V-MOS).